The following is a 153-amino-acid chain: Histone H2B.3 (153 aa).

Residues 1-28 (MAPKADKKPAAKKPAEEEPATEKAEKAP) are compositionally biased toward basic and acidic residues. Residues 1 to 60 (MAPKADKKPAAKKPAEEEPATEKAEKAPAGKKPKAEKRLPAGKSAGKEGGEGKKGKKKAK) are disordered. An N6-acetyllysine mark is found at lysine 7 and lysine 37. Lysine 149 participates in a covalent cross-link: Glycyl lysine isopeptide (Lys-Gly) (interchain with G-Cter in ubiquitin).

This sequence belongs to the histone H2B family. In terms of assembly, the nucleosome is a histone octamer containing two molecules each of H2A, H2B, H3 and H4 assembled in one H3-H4 heterotetramer and two H2A-H2B heterodimers. The octamer wraps approximately 147 bp of DNA. Can be acetylated to form H2BK6ac and H2BK33ac. Post-translationally, monoubiquitinated to form H2BK143ub1; may give a specific tag for epigenetic transcriptional activation.

Its subcellular location is the nucleus. The protein resides in the chromosome. Core component of nucleosome. Nucleosomes wrap and compact DNA into chromatin, limiting DNA accessibility to the cellular machineries which require DNA as a template. Histones thereby play a central role in transcription regulation, DNA repair, DNA replication and chromosomal stability. DNA accessibility is regulated via a complex set of post-translational modifications of histones, also called histone code, and nucleosome remodeling. The protein is Histone H2B.3 of Zea mays (Maize).